The following is a 574-amino-acid chain: Serine/threonine-protein kinase B (574 aa).

The Protein kinase domain occupies 34–301 (YQTLGLLGKG…VLDALEMPTY (268 aa)). Residues 40 to 48 (LGKGGFGAT) and Lys-65 contribute to the ATP site. The active-site Proton acceptor is Asp-163. Residues 319–407 (GAGDEPATGI…GGSVGAGGID (89 aa)) are disordered. Residues 343 to 364 (TRFNTNVQPRDPSSTSLNTGIK) are compositionally biased toward polar residues. Pentapeptide repeat domains lie at 454 to 493 (QNLVGIVLAKAFVPGINCYQANLTNANFEQAELTRADFGK) and 504 to 543 (ANLSDAYFGYADLRGADLRGANLNGVNFKYANLQGANFSG).

This sequence belongs to the protein kinase superfamily. Ser/Thr protein kinase family. In terms of processing, autophosphorylated.

The enzyme catalyses L-seryl-[protein] + ATP = O-phospho-L-seryl-[protein] + ADP + H(+). The catalysed reaction is L-threonyl-[protein] + ATP = O-phospho-L-threonyl-[protein] + ADP + H(+). Protein kinase required for cell motility, but not for phototaxis. The polypeptide is Serine/threonine-protein kinase B (spkB) (Synechocystis sp. (strain ATCC 27184 / PCC 6803 / Kazusa)).